We begin with the raw amino-acid sequence, 258 residues long: Imidazole glycerol phosphate synthase subunit HisF (258 aa).

Active-site residues include D11 and D130.

The protein belongs to the HisA/HisF family. As to quaternary structure, heterodimer of HisH and HisF.

It is found in the cytoplasm. The enzyme catalyses 5-[(5-phospho-1-deoxy-D-ribulos-1-ylimino)methylamino]-1-(5-phospho-beta-D-ribosyl)imidazole-4-carboxamide + L-glutamine = D-erythro-1-(imidazol-4-yl)glycerol 3-phosphate + 5-amino-1-(5-phospho-beta-D-ribosyl)imidazole-4-carboxamide + L-glutamate + H(+). It participates in amino-acid biosynthesis; L-histidine biosynthesis; L-histidine from 5-phospho-alpha-D-ribose 1-diphosphate: step 5/9. Functionally, IGPS catalyzes the conversion of PRFAR and glutamine to IGP, AICAR and glutamate. The HisF subunit catalyzes the cyclization activity that produces IGP and AICAR from PRFAR using the ammonia provided by the HisH subunit. The protein is Imidazole glycerol phosphate synthase subunit HisF of Xanthomonas axonopodis pv. citri (strain 306).